Here is a 540-residue protein sequence, read N- to C-terminus: Calnexin homolog (540 aa).

The first 29 residues, 1–29 (MELSRRKMCCYIQFCCFVLIGCFISQICA), serve as a signal peptide directing secretion. At 30-469 (SSDAIFYESF…EKAETQPNIT (440 aa)) the chain is on the lumenal side. Ca(2+) is bound by residues S38 and D69. C112 and C147 are joined by a disulfide. Residues Y116, K118, Y138, and D145 each contribute to the an alpha-D-glucoside site. Positions 221-301 (LIPTKTIPDP…DWDDEEDGEW (81 aa)) are disordered. The p domain (Extended arm) stretch occupies residues 227–360 (IPDPDDKKPE…REIPNPDYFE (134 aa)). Basic and acidic residues predominate over residues 228–253 (PDPDDKKPEDWDERAKIPDPEATKPD). 5 repeat units span residues 229–240 (DPDDKKPEDWDE), 246–257 (DPEATKPDDWDE), 265–276 (DEEAEKPEGWLD), 284–295 (DPEAVKPEDWDD), and 299–309 (GEWEAPQIENP). 2 4 X approximate repeats regions span residues 229 to 295 (DPDD…DWDD) and 299 to 356 (GEWE…IPNP). Acidic residues-rich tracts occupy residues 254–285 (DWDE…IDDP) and 292–301 (DWDDEEDGEW). C311 and C317 are oxidised to a cystine. Repeat copies occupy residues 318 to 328 (GEWRRPLKRNP), 332 to 342 (GKWHAPLIDNP), and 346 to 356 (GIWKPREIPNP). E375 contacts an alpha-D-glucoside. Position 386 (D386) interacts with Ca(2+). An N-linked (GlcNAc...) asparagine glycan is attached at N467. The chain crosses the membrane as a helical span at residues 470-490 (IGVIVSIIVVIFSILLKLLFG). Topologically, residues 491 to 540 (GKKAAPKVNVVPKKKEEPEASNTAEVREGEEEKTEGEVAAAPRRRPRRDT) are cytoplasmic. Residues 499–540 (NVVPKKKEEPEASNTAEVREGEEEKTEGEVAAAPRRRPRRDT) form a disordered region.

It belongs to the calreticulin family.

Its subcellular location is the endoplasmic reticulum membrane. Calcium-binding protein that interacts with newly synthesized monoglucosylated glycoproteins in the endoplasmic reticulum. It may act in assisting protein assembly and/or in the retention within the ER of unassembled protein subunits. It seems to play a major role in the quality control apparatus of the ER by the retention of incorrectly folded proteins. The chain is Calnexin homolog from Helianthus tuberosus (Jerusalem artichoke).